We begin with the raw amino-acid sequence, 432 residues long: Adenylosuccinate synthetase (432 aa).

GTP-binding positions include 13–19 and 41–43; these read GDEGKGK and GHT. Aspartate 14 functions as the Proton acceptor in the catalytic mechanism. Mg(2+) is bound by residues aspartate 14 and glycine 41. IMP contacts are provided by residues 14-17, 39-42, threonine 130, arginine 144, glutamine 225, threonine 240, and arginine 304; these read DEGK and NAGH. Catalysis depends on histidine 42, which acts as the Proton donor. Substrate is bound at residue 300–306; sequence ATTGRKR. GTP contacts are provided by residues arginine 306, 332 to 334, and 415 to 417; these read KLD and STG.

Belongs to the adenylosuccinate synthetase family. In terms of assembly, homodimer. The cofactor is Mg(2+).

Its subcellular location is the cytoplasm. It catalyses the reaction IMP + L-aspartate + GTP = N(6)-(1,2-dicarboxyethyl)-AMP + GDP + phosphate + 2 H(+). It functions in the pathway purine metabolism; AMP biosynthesis via de novo pathway; AMP from IMP: step 1/2. Functionally, plays an important role in the de novo pathway of purine nucleotide biosynthesis. Catalyzes the first committed step in the biosynthesis of AMP from IMP. The polypeptide is Adenylosuccinate synthetase (Pseudoalteromonas atlantica (strain T6c / ATCC BAA-1087)).